Reading from the N-terminus, the 249-residue chain is Putative TrmH family tRNA/rRNA methyltransferase (249 aa).

Residues glycine 196, isoleucine 216, and leucine 225 each contribute to the S-adenosyl-L-methionine site.

Belongs to the class IV-like SAM-binding methyltransferase superfamily. RNA methyltransferase TrmH family.

The polypeptide is Putative TrmH family tRNA/rRNA methyltransferase (Staphylococcus haemolyticus (strain JCSC1435)).